We begin with the raw amino-acid sequence, 469 residues long: 3-isopropylmalate dehydratase large subunit (469 aa).

Residues cysteine 347, cysteine 410, and cysteine 413 each coordinate [4Fe-4S] cluster.

This sequence belongs to the aconitase/IPM isomerase family. LeuC type 1 subfamily. In terms of assembly, heterodimer of LeuC and LeuD. [4Fe-4S] cluster serves as cofactor.

It catalyses the reaction (2R,3S)-3-isopropylmalate = (2S)-2-isopropylmalate. Its pathway is amino-acid biosynthesis; L-leucine biosynthesis; L-leucine from 3-methyl-2-oxobutanoate: step 2/4. Its function is as follows. Catalyzes the isomerization between 2-isopropylmalate and 3-isopropylmalate, via the formation of 2-isopropylmaleate. The sequence is that of 3-isopropylmalate dehydratase large subunit from Polynucleobacter necessarius subsp. necessarius (strain STIR1).